The following is a 335-amino-acid chain: Olfactory receptor 52B6 (335 aa).

Residues 1 to 45 (MAQVRALHKIMALFSANSIGAMNNSDTRIAGCFLTGIPGLEQLHI) lie on the Extracellular side of the membrane. An N-linked (GlcNAc...) asparagine glycan is attached at N23. A helical membrane pass occupies residues 46 to 66 (WLSIPFCIMYITALEGNGILI). Topologically, residues 67–74 (CVILSQAI) are cytoplasmic. Residues 75–95 (LHEPMYIFLSMLASADVLLST) traverse the membrane as a helical segment. The Extracellular portion of the chain corresponds to 96-119 (TTMPKALANLWLGYSLISFDGCLT). C117 and C208 are oxidised to a cystine. A helical membrane pass occupies residues 120–139 (QMFFIHFLFIHSAVLLAMAF). Residues 140–158 (DRYVAICSPLRYVTILTSK) lie on the Cytoplasmic side of the membrane. The chain crosses the membrane as a helical span at residues 159–179 (VIGKIVTAALSHSFIIMFPSI). Residues 180 to 215 (FLLEHLHYCQINIIAHTFCEHMGIAHLSCSDISINV) are Extracellular-facing. A helical membrane pass occupies residues 216 to 236 (WYGLAAALLSTGLDIMLITVS). Residues 237–256 (YIHILQAVFRLLSQDARSKA) lie on the Cytoplasmic side of the membrane. A helical transmembrane segment spans residues 257-277 (LSTCGSHICVILLFYVPALFS). Residues 278 to 293 (VFAYRFGGRSVPCYVH) lie on the Extracellular side of the membrane. Residues 294 to 314 (ILLASLYVVIPPMLNPVIYGV) traverse the membrane as a helical segment. Over 315–335 (RTKPILEGAKQMFSNLAKGSK) the chain is Cytoplasmic.

The protein belongs to the G-protein coupled receptor 1 family.

It localises to the cell membrane. In terms of biological role, odorant receptor. The chain is Olfactory receptor 52B6 (OR52B6) from Homo sapiens (Human).